We begin with the raw amino-acid sequence, 611 residues long: Chaperonin 60 subunit beta 4, chloroplastic (611 aa).

The N-terminal 37 residues, 1–37 (MAFSQAALSALPLSDRTFRKKPSSSSSSSPNFVLRVR), are a transit peptide targeting the chloroplast. Residues 377–480 (QKAVDERVSQ…LDNTEQKIGA (104 aa)) are a coiled coil. The tract at residues 574–595 (INPPLPTSSPATSSMFPDRKLP) is disordered.

It belongs to the chaperonin (HSP60) family. As to quaternary structure, part of the Cpn60 complex composed of 7 alpha and 7 beta subunits. Can also form a complex composed of 14 beta subunits only. Both complexes show ATPase activity. The Cpn60 complex interacts with the Cpn10 complex. Interacts with NDHH.

The protein resides in the plastid. It is found in the chloroplast stroma. Functionally, involved specifically in the folding of NDHH, a subunit of the chloroplast NADH dehydrogenase-like complex (NDH). The chain is Chaperonin 60 subunit beta 4, chloroplastic (CPN60B4) from Arabidopsis thaliana (Mouse-ear cress).